The sequence spans 183 residues: Large ribosomal subunit protein uL6 (183 aa).

This sequence belongs to the universal ribosomal protein uL6 family. Part of the 50S ribosomal subunit.

Functionally, this protein binds to the 23S rRNA, and is important in its secondary structure. It is located near the subunit interface in the base of the L7/L12 stalk, and near the tRNA binding site of the peptidyltransferase center. This is Large ribosomal subunit protein uL6 from Porphyromonas gingivalis (strain ATCC 33277 / DSM 20709 / CIP 103683 / JCM 12257 / NCTC 11834 / 2561).